A 66-amino-acid chain; its full sequence is Large ribosomal subunit protein bL33 (66 aa).

It belongs to the bacterial ribosomal protein bL33 family.

The sequence is that of Large ribosomal subunit protein bL33 from Wolbachia pipientis wMel.